The sequence spans 172 residues: Macro domain-containing protein CT2219 (172 aa).

A Macro domain is found at 1–172 (MPDNVLIHAI…DVYQKALAAG (172 aa)).

It belongs to the MacroD-type family.

The polypeptide is Macro domain-containing protein CT2219 (Chlorobaculum tepidum (strain ATCC 49652 / DSM 12025 / NBRC 103806 / TLS) (Chlorobium tepidum)).